The primary structure comprises 207 residues: Cilia- and flagella-associated protein 418 (207 aa).

The interval 1 to 75 (MAEDLDELLD…LINEIFEEPH (75 aa)) is required for interaction with FAM161A.

As to quaternary structure, interacts (via N-terminus) with FAM161A (via central region); the interaction is direct. In terms of tissue distribution, expressed in the retina (at protein level).

The protein resides in the cytoplasm. The protein localises to the photoreceptor inner segment. In terms of biological role, may be involved in photoreceptor outer segment disk morphogenesis. This is Cilia- and flagella-associated protein 418 (CFAP418) from Bos taurus (Bovine).